Here is a 118-residue protein sequence, read N- to C-terminus: Mating-type P-specific polypeptide Pc (118 aa).

Residues 29–97 constitute a DNA-binding region (HMG box); the sequence is KTTIYKNGFM…VRRQIAKLER (69 aa).

The protein localises to the nucleus. Its function is as follows. Mating type proteins are sequence specific DNA-binding proteins that act as master switches in yeast differentiation by controlling gene expression in a cell type-specific fashion. Required for conjugation and efficient meiosis. The polypeptide is Mating-type P-specific polypeptide Pc (mat2-Pc) (Schizosaccharomyces pombe (Fission yeast)).